The sequence spans 1465 residues: DNA polymerase alpha catalytic subunit (1465 aa).

2 disordered regions span residues 20 to 39 and 105 to 135; these read GSFA…GRQE and LEDD…PSVT. The segment covering 26-35 has biased composition (basic residues); that stretch reads RARREKKSKK. A Phosphothreonine modification is found at Thr180. Residues Ser192 and Ser215 each carry the phosphoserine modification. At Lys230 the chain carries N6-acetyllysine. Residues 261–297 are disordered; the sequence is DESMDTEKVDEKPVTAKTWDQETEPVERVEHEADPER. Basic and acidic residues-rich tracts occupy residues 265 to 274 and 285 to 297; these read DTEKVDEKPV and PVER…DPER. The segment at 654–719 is DNA-binding; it reads RINECKVPYW…YHLSELVQQI (66 aa). N6-succinyllysine is present on Lys974. The segment at 1249–1380 is DNA-binding; that stretch reads QFRVHQYHKD…NGPLCPVCMK (132 aa). 8 residues coordinate Zn(2+): Cys1287, Cys1290, Cys1314, Cys1319, Cys1352, Cys1357, Cys1375, and Cys1378. The CysA-type zinc finger occupies 1287–1317; sequence CPSCGTENIYDNVFEGSGLDMEPSLYRCSNV. Positions 1352 to 1378 match the CysB motif motif; that stretch reads CEEPTCCSRLRRLPLHFSRNGPLCPVC.

The protein belongs to the DNA polymerase type-B family. In terms of assembly, component of the alpha DNA polymerase complex (also known as the alpha DNA polymerase-primase complex) consisting of four subunits: the catalytic subunit POLA1, the regulatory subunit POLA2, and the primase complex subunits PRIM1 and PRIM2 respectively. Within the complex, POLA1 directly interacts with PRIM2. Interacts with PARP1; this interaction functions as part of the control of replication fork progression. Interacts with MCM10 and WDHD1; these interactions recruit the polymerase alpha complex to the pre-replicative complex bound to DNA. Interacts with RPA1; this interaction stabilizes the replicative complex and reduces the misincorporation rate of DNA polymerase alpha by acting as a fidelity clamp. As to expression, expressed in those zones containing proliferating cells in the developing embryonic neocortex, as well as in the lateral and medial ganglionic eminences. After birth, expressed in cells that remain proliferating in the ventricular and subventricular zone of the striatum.

The protein resides in the nucleus. Its subcellular location is the cytoplasm. The protein localises to the cytosol. The enzyme catalyses DNA(n) + a 2'-deoxyribonucleoside 5'-triphosphate = DNA(n+1) + diphosphate. Catalytic subunit of the DNA polymerase alpha complex (also known as the alpha DNA polymerase-primase complex) which plays an essential role in the initiation of DNA synthesis. During the S phase of the cell cycle, the DNA polymerase alpha complex (composed of a catalytic subunit POLA1, a regulatory subunit POLA2 and two primase subunits PRIM1 and PRIM2) is recruited to DNA at the replicative forks via direct interactions with MCM10 and WDHD1. The primase subunit of the polymerase alpha complex initiates DNA synthesis by oligomerising short RNA primers on both leading and lagging strands. These primers are initially extended by the polymerase alpha catalytic subunit and subsequently transferred to polymerase delta and polymerase epsilon for processive synthesis on the lagging and leading strand, respectively. The reason this transfer occurs is because the polymerase alpha has limited processivity and lacks intrinsic 3' exonuclease activity for proofreading error, and therefore is not well suited for replicating long complexes. In the cytosol, responsible for a substantial proportion of the physiological concentration of cytosolic RNA:DNA hybrids, which are necessary to prevent spontaneous activation of type I interferon responses. The protein is DNA polymerase alpha catalytic subunit (Pola1) of Mus musculus (Mouse).